A 298-amino-acid chain; its full sequence is Ankyrin repeat domain-containing protein 29 (298 aa).

8 ANK repeats span residues 8 to 38, 42 to 71, 75 to 104, 108 to 137, 141 to 170, 174 to 203, 207 to 236, and 239 to 268; these read PLANAVFWAARKGNLALLQLLLNSGRVDVDC, YGTTALMVASYSGHYECVRELIMQGADINL, TGSTALFFASQQGHNEIVKLLFEFGASTEF, DGGTALCAACQFGHSRVVDTLLKNGANVHD, DGATALFLASQEGHVNLIRQLLSSGAKVNQ, DGTAPLWMAAQMGHSEVVKVLLLRGADRDA, DGSTALFKAAHKGHCSVMEELLKFSPSLGI, and NGSTALHAAVMGGSLKAVDLLLKANADPAL.

This is Ankyrin repeat domain-containing protein 29 (ankrd29) from Danio rerio (Zebrafish).